Here is a 158-residue protein sequence, read N- to C-terminus: Transcription elongation factor GreA (158 aa).

Residues 53-75 (AKERQGQVEATIGDLEDKLSRAQ) are a coiled coil.

Belongs to the GreA/GreB family.

Functionally, necessary for efficient RNA polymerase transcription elongation past template-encoded arresting sites. The arresting sites in DNA have the property of trapping a certain fraction of elongating RNA polymerases that pass through, resulting in locked ternary complexes. Cleavage of the nascent transcript by cleavage factors such as GreA or GreB allows the resumption of elongation from the new 3'terminus. GreA releases sequences of 2 to 3 nucleotides. In Sphingopyxis alaskensis (strain DSM 13593 / LMG 18877 / RB2256) (Sphingomonas alaskensis), this protein is Transcription elongation factor GreA.